Consider the following 568-residue polypeptide: Sulfite reductase [NADPH] hemoprotein beta-component (568 aa).

[4Fe-4S] cluster contacts are provided by cysteine 425, cysteine 431, cysteine 470, and cysteine 474. Residue cysteine 474 participates in siroheme binding.

This sequence belongs to the nitrite and sulfite reductase 4Fe-4S domain family. In terms of assembly, alpha(8)-beta(8). The alpha component is a flavoprotein, the beta component is a hemoprotein. Siroheme serves as cofactor. It depends on [4Fe-4S] cluster as a cofactor.

It carries out the reaction hydrogen sulfide + 3 NADP(+) + 3 H2O = sulfite + 3 NADPH + 4 H(+). It participates in sulfur metabolism; hydrogen sulfide biosynthesis; hydrogen sulfide from sulfite (NADPH route): step 1/1. Component of the sulfite reductase complex that catalyzes the 6-electron reduction of sulfite to sulfide. This is one of several activities required for the biosynthesis of L-cysteine from sulfate. The sequence is that of Sulfite reductase [NADPH] hemoprotein beta-component from Xanthomonas oryzae pv. oryzae (strain MAFF 311018).